The sequence spans 465 residues: MIQLYNSLTNKKEPFVPIVPGKVSMYVCGPTVYNYIHVGNARPAIAFDTVRRYLTYRGYEVKYVLNFTDVDDKIIRTANELGEDTETLTNRYIEAYLADTGALNVQPADVHPRVTDTMEEIIEFIRQLETEGFAYESEGDVYFRTKKFETYGKLSQQSIEDLRAGSRVDVGEKKEDPLDFVLWKAAKPDEPSWDSPWGKGRPGWHIECSAMAKKHLGTTIDIHAGGHDLKFPHHENEIAQSEACNHAKFANYWLHNGFINIENEKMSKSLGNFLLVHEALKEVDPMVLRFFMLSVHYRHPINYSRELIEQAANGWSRIKEAYQNIEYRLSVTAGLGEASESMERKLESIKASFIESMDDDINTANAVTVLFDLAREANIYAKADHVAKATLEQVLSLFDELTGVLGLTLAEEKELLDAEIDQLIQERNDARAARNFARADEIRDLLKEQNIQLEDTAQGVRWKRL.

Cys28 provides a ligand contact to Zn(2+). Positions 30–40 (PTVYNYIHVGN) match the 'HIGH' region motif. 3 residues coordinate Zn(2+): Cys208, His233, and Glu237. The short motif at 265–269 (KMSKS) is the 'KMSKS' region element. Lys268 serves as a coordination point for ATP.

This sequence belongs to the class-I aminoacyl-tRNA synthetase family. In terms of assembly, monomer. The cofactor is Zn(2+).

The protein localises to the cytoplasm. It catalyses the reaction tRNA(Cys) + L-cysteine + ATP = L-cysteinyl-tRNA(Cys) + AMP + diphosphate. The polypeptide is Cysteine--tRNA ligase (Exiguobacterium sp. (strain ATCC BAA-1283 / AT1b)).